A 695-amino-acid chain; its full sequence is Ubiquitin carboxyl-terminal hydrolase 20 (695 aa).

Disordered regions lie at residues Met-1–Leu-20 and Ser-42–Tyr-162. 2 stretches are compositionally biased toward low complexity: residues Pro-9–Leu-20 and Asn-61–Val-86. Positions Asp-112 to Leu-124 are enriched in acidic residues. The 301-residue stretch at Ala-176–Glu-476 folds into the USP domain. Cys-185 serves as the catalytic Nucleophile. The active-site Proton acceptor is the His-435. The segment covering Ser-556–Leu-571 has biased composition (low complexity). 2 disordered regions span residues Ser-556–Glu-585 and Ala-674–Thr-695.

Belongs to the peptidase C19 family.

It catalyses the reaction Thiol-dependent hydrolysis of ester, thioester, amide, peptide and isopeptide bonds formed by the C-terminal Gly of ubiquitin (a 76-residue protein attached to proteins as an intracellular targeting signal).. Recognizes and hydrolyzes the peptide bond at the C-terminal Gly of ubiquitin. Involved in the processing of poly-ubiquitin precursors as well as that of ubiquitinated proteins. The sequence is that of Ubiquitin carboxyl-terminal hydrolase 20 (UBP20) from Arabidopsis thaliana (Mouse-ear cress).